The primary structure comprises 391 residues: uncharacterized protein (391 aa).

The protein belongs to the mycobacterial PPE family.

This is an uncharacterized protein from Mycobacterium tuberculosis (strain CDC 1551 / Oshkosh).